The primary structure comprises 124 residues: Large ribosomal subunit protein bL17 (124 aa).

It belongs to the bacterial ribosomal protein bL17 family. In terms of assembly, part of the 50S ribosomal subunit. Contacts protein L32.

This Persephonella marina (strain DSM 14350 / EX-H1) protein is Large ribosomal subunit protein bL17.